Consider the following 354-residue polypeptide: Uroporphyrinogen decarboxylase (354 aa).

Substrate is bound by residues 27 to 31, Asp-77, Tyr-154, Ser-209, and His-327; that span reads RQAGR.

This sequence belongs to the uroporphyrinogen decarboxylase family. In terms of assembly, homodimer.

It is found in the cytoplasm. The catalysed reaction is uroporphyrinogen III + 4 H(+) = coproporphyrinogen III + 4 CO2. It participates in porphyrin-containing compound metabolism; protoporphyrin-IX biosynthesis; coproporphyrinogen-III from 5-aminolevulinate: step 4/4. Functionally, catalyzes the decarboxylation of four acetate groups of uroporphyrinogen-III to yield coproporphyrinogen-III. The polypeptide is Uroporphyrinogen decarboxylase (Shewanella halifaxensis (strain HAW-EB4)).